The chain runs to 431 residues: Protein translocase subunit SecY (431 aa).

10 helical membrane passes run 18–38, 64–84, 116–136, 146–166, 175–195, 214–234, 262–282, 309–329, 369–389, and 390–410; these read IIFT…PVPH, LFNF…SIII, FTIV…NNMA, VGTY…LMWL, VGNG…PQTI, IIKV…VIFI, LPLK…AFIT, PVGM…YAFV, FVGS…VNIA, and GLPS…GVAL.

Belongs to the SecY/SEC61-alpha family. Component of the Sec protein translocase complex. Heterotrimer consisting of SecY, SecE and SecG subunits. The heterotrimers can form oligomers, although 1 heterotrimer is thought to be able to translocate proteins. Interacts with the ribosome. Interacts with SecDF, and other proteins may be involved. Interacts with SecA.

It is found in the cell membrane. The central subunit of the protein translocation channel SecYEG. Consists of two halves formed by TMs 1-5 and 6-10. These two domains form a lateral gate at the front which open onto the bilayer between TMs 2 and 7, and are clamped together by SecE at the back. The channel is closed by both a pore ring composed of hydrophobic SecY resides and a short helix (helix 2A) on the extracellular side of the membrane which forms a plug. The plug probably moves laterally to allow the channel to open. The ring and the pore may move independently. This Bacillus licheniformis (strain ATCC 14580 / DSM 13 / JCM 2505 / CCUG 7422 / NBRC 12200 / NCIMB 9375 / NCTC 10341 / NRRL NRS-1264 / Gibson 46) protein is Protein translocase subunit SecY.